A 373-amino-acid polypeptide reads, in one-letter code: D-alanine--D-alanine ligase (373 aa).

The region spanning 156–363 (KKLLAADGLP…YPTLLATMIE (208 aa)) is the ATP-grasp domain. 184–239 (CERLGLPVFVKPARGGSSIGVSRVSSWDQLPAAVARARRHDPKVIVEAAISGRELE) contributes to the ATP binding site. 3 residues coordinate Mg(2+): Asp-318, Glu-330, and Asn-332.

The protein belongs to the D-alanine--D-alanine ligase family. Requires Mg(2+) as cofactor. The cofactor is Mn(2+).

It localises to the cytoplasm. It carries out the reaction 2 D-alanine + ATP = D-alanyl-D-alanine + ADP + phosphate + H(+). Its pathway is cell wall biogenesis; peptidoglycan biosynthesis. Its function is as follows. Cell wall formation. The protein is D-alanine--D-alanine ligase of Mycobacterium bovis (strain BCG / Pasteur 1173P2).